The chain runs to 429 residues: MSYLFTSESVSEGHPDKVSDQISDAILDQFLATDPDSKVACETLVTTGQVVLAGEVKSRSYVDVQETARRVIERIGYTKSEYGFDTRSCGIFSSIHEQSADINRGVDRSDRSEQGAGDQGMMFGYATNETENYMPLTVDLAHHLLYELAAIRKEPSSPMPYLRPDAKSQVTIEHDDEGRPVRIDTIVISTQHDEFVQASDGISEAEADRMMQERIHHDIATILIPRVKMLYKPEIAALFDEKVRLFVNPTGKFVIGGPHGDTGLTGRKIIVDTYGGRASHGGGAFSGKDPSKVDRSAAYAARHIAKNMVAAGVADEMLVQVAYAIGVAEPVSIYVNTKGRSHVALSDGQIAEKIKKIFDMRPYAIEQRLKLRNPIYEETAAYGHFGREPYEAYKTFVDEHGTEQMRIVELFTWEKLDYVDKIRAEFGLS.

H14 serves as a coordination point for ATP. D16 is a Mg(2+) binding site. Residue E42 coordinates K(+). E55 and Q98 together coordinate L-methionine. The segment at 98–108 (QSADINRGVDR) is flexible loop. ATP is bound by residues 165–167 (DAK), 252–253 (KF), D261, 267–268 (RK), A284, and K288. D261 provides a ligand contact to L-methionine. K292 provides a ligand contact to L-methionine.

Belongs to the AdoMet synthase family. In terms of assembly, homotetramer; dimer of dimers. Requires Mg(2+) as cofactor. It depends on K(+) as a cofactor.

The protein resides in the cytoplasm. It catalyses the reaction L-methionine + ATP + H2O = S-adenosyl-L-methionine + phosphate + diphosphate. The protein operates within amino-acid biosynthesis; S-adenosyl-L-methionine biosynthesis; S-adenosyl-L-methionine from L-methionine: step 1/1. In terms of biological role, catalyzes the formation of S-adenosylmethionine (AdoMet) from methionine and ATP. The overall synthetic reaction is composed of two sequential steps, AdoMet formation and the subsequent tripolyphosphate hydrolysis which occurs prior to release of AdoMet from the enzyme. The sequence is that of S-adenosylmethionine synthase from Porphyromonas gingivalis (strain ATCC BAA-308 / W83).